Reading from the N-terminus, the 568-residue chain is Estrogen receptor beta-1 (568 aa).

The interval 12–169 is modulating; the sequence is SEYAEGDSSL…SLRGKADMHY (158 aa). 2 NR C4-type zinc fingers span residues 170–190 and 206–230; these read CAVC…CEGC and CPAT…LRKC. Residues 170 to 235 constitute a DNA-binding region (nuclear receptor); that stretch reads CAVCSDYASG…RLRKCYEVGM (66 aa). Residues 292–528 enclose the NR LBD domain; sequence SPEELIARIM…DLLLEMLDAH (237 aa).

This sequence belongs to the nuclear hormone receptor family. NR3 subfamily. In terms of assembly, binds DNA as a homodimer. Can form a heterodimer with ER-alpha.

It localises to the nucleus. Binds estrogens with an affinity similar to that of ER-alpha, and activates expression of reporter genes containing estrogen response elements (ERE) in an estrogen-dependent manner. This Carassius auratus (Goldfish) protein is Estrogen receptor beta-1 (esr2a).